Reading from the N-terminus, the 103-residue chain is Large ribosomal subunit protein uL24 (103 aa).

This sequence belongs to the universal ribosomal protein uL24 family. Part of the 50S ribosomal subunit.

Functionally, one of two assembly initiator proteins, it binds directly to the 5'-end of the 23S rRNA, where it nucleates assembly of the 50S subunit. One of the proteins that surrounds the polypeptide exit tunnel on the outside of the subunit. The chain is Large ribosomal subunit protein uL24 from Actinobacillus succinogenes (strain ATCC 55618 / DSM 22257 / CCUG 43843 / 130Z).